The chain runs to 386 residues: Succinate--CoA ligase [ADP-forming] subunit beta (386 aa).

Residues 9 to 244 (KELFANYGVP…LDEEEPLEVE (236 aa)) form the ATP-grasp domain. ATP is bound by residues Lys46, 53 to 55 (GRG), Glu99, Leu102, and Glu107. Mg(2+) is bound by residues Asn199 and Asp213. Residues Asn264 and 321 to 323 (GIL) contribute to the substrate site.

This sequence belongs to the succinate/malate CoA ligase beta subunit family. In terms of assembly, heterotetramer of two alpha and two beta subunits. Requires Mg(2+) as cofactor.

It catalyses the reaction succinate + ATP + CoA = succinyl-CoA + ADP + phosphate. It carries out the reaction GTP + succinate + CoA = succinyl-CoA + GDP + phosphate. The protein operates within carbohydrate metabolism; tricarboxylic acid cycle; succinate from succinyl-CoA (ligase route): step 1/1. In terms of biological role, succinyl-CoA synthetase functions in the citric acid cycle (TCA), coupling the hydrolysis of succinyl-CoA to the synthesis of either ATP or GTP and thus represents the only step of substrate-level phosphorylation in the TCA. The beta subunit provides nucleotide specificity of the enzyme and binds the substrate succinate, while the binding sites for coenzyme A and phosphate are found in the alpha subunit. This is Succinate--CoA ligase [ADP-forming] subunit beta from Desulfatibacillum aliphaticivorans.